The primary structure comprises 518 residues: Kelch repeat and BTB domain-containing protein 4 (518 aa).

The region spanning 45-112 (ADVTISVEGR…IYHGTVKLRA (68 aa)) is the BTB domain. The region spanning 147-239 (CLQVMWLADR…SLKEIGENVH (93 aa)) is the BACK domain. Kelch repeat units follow at residues 239–285 (HIYL…KHGG), 286–328 (DLYV…SVPG), 331–378 (AIYS…NLNG), 380–430 (IYLL…VHKD), and 432–481 (VFIV…VFRD).

In terms of assembly, component of the BCR(KBTBD4) E3 ubiquitin ligase complex, at least composed of CUL3, KBTBD4 and RBX1.

In terms of biological role, substrate-specific adapter of a BCR (BTB-CUL3-RBX1) E3 ubiquitin ligase complex which targets CoREST corepressor complex components RCOR1, KDM1A/LSD1 and HDAC2 for proteasomal degradation. RCOR1 is likely to be the primary target while degradation of KDM1A and HDAC2 is likely due to their association with RCOR1. Also targets RCOR3, MIER2 and MIER3 for proteasomal degradation as well as associated proteins ZNF217 and RREB1. Degradation is dependent on the presence of an ELM2 domain in the target proteins. The chain is Kelch repeat and BTB domain-containing protein 4 (KBTBD4) from Pongo abelii (Sumatran orangutan).